The sequence spans 93 residues: Sec-independent protein translocase protein TatA (93 aa).

A helical membrane pass occupies residues 1–21 (MGIFDWKHWIVILVVVVLVFG). The segment at 43–93 (MNDDEKPAEPVVPPAAQPVPPVQPQQSAPLNQPHTIDVQAQKVEEPTRKDS) is disordered. Residues 52–65 (PVVPPAAQPVPPVQ) are compositionally biased toward pro residues. The span at 84 to 93 (KVEEPTRKDS) shows a compositional bias: basic and acidic residues.

This sequence belongs to the TatA/E family. In terms of assembly, the Tat system comprises two distinct complexes: a TatABC complex, containing multiple copies of TatA, TatB and TatC subunits, and a separate TatA complex, containing only TatA subunits. Substrates initially bind to the TatABC complex, which probably triggers association of the separate TatA complex to form the active translocon.

The protein resides in the cell inner membrane. Part of the twin-arginine translocation (Tat) system that transports large folded proteins containing a characteristic twin-arginine motif in their signal peptide across membranes. TatA could form the protein-conducting channel of the Tat system. The chain is Sec-independent protein translocase protein TatA from Pseudomonas fluorescens (strain ATCC BAA-477 / NRRL B-23932 / Pf-5).